The following is a 401-amino-acid chain: Histone acetyltransferase type B subunit 2 (401 aa).

WD repeat units lie at residues 116–147 (EHEEEITRARYMPQDPNIVATINGQGTVFLYS), 158–189 (FHKDNGYALSFSTLVKGRLLSGSDDHTVALWE), 206–237 (LHSDIINDNKWHNFNKDLFGTVSEDSLLKIND), 249–280 (KCPQPFNTLAFSHHSSNLLAAAGMDSYVYLYD), and 293–324 (GHEDAVNNLEFSTHVDGVVVSSGSDNRLMMWD). The interaction with the histone H4 N-terminus stretch occupies residues 335–339 (DDAED). Residues 350–381 (GHRSSVNDFDLNPQIPWLVASAEEENILQVWK) form a WD 6 repeat.

Belongs to the WD repeat RBAP46/RBAP48/MSI1 family. Component of the HAT-B complex composed of at least HAT1 and HAT2. In the cytoplasm, this complex binds to the histone H4 tail. In the nucleus, the HAT-B complex has an additional component, the histone H3/H4 chaperone HIF1.

The protein localises to the cytoplasm. It localises to the nucleus. Regulatory subunit of the histone acetylase B (HAT-B) complex. The complex acetylates 'Lys-12' of histone H4 which is required for telomeric silencing. HAT2 is required for high affinity binding of the acetyltransferase to histone H4, for the nuclear location of HAT1 and for the HAT1-HIF1 interaction. Alone, it is unable to bind to H4, requiring HAT1 for high affinity interaction with the histone tail. HAT2 also has a HAT1 independent function in life-span regulation. In Saccharomyces cerevisiae (strain ATCC 204508 / S288c) (Baker's yeast), this protein is Histone acetyltransferase type B subunit 2 (HAT2).